Consider the following 272-residue polypeptide: Probable protein VP2 (272 aa).

2 disordered regions span residues 50-116 (GGSR…DFAD) and 195-272 (YSPA…SSSS). Pro residues predominate over residues 78–90 (APDPPAGNQPPAL). Gly residues predominate over residues 94-108 (GDGGNESGAGGGESG). The segment covering 218–230 (SKRDNKENRDRGR) has biased composition (basic and acidic residues). The segment covering 231–246 (AKARAKQKPKKRRRRA) has biased composition (basic residues). The segment covering 249–272 (ESSSSSSSKSSFNSEEGSSASSSS) has biased composition (low complexity).

Phosphorylated at C-terminal serines.

The polypeptide is Probable protein VP2 (Homo sapiens (Human)).